The sequence spans 904 residues: Phosphoenolpyruvate carboxylase (904 aa).

Residues His151 and Lys570 contribute to the active site.

It belongs to the PEPCase type 1 family. The cofactor is Mg(2+).

The enzyme catalyses oxaloacetate + phosphate = phosphoenolpyruvate + hydrogencarbonate. In terms of biological role, forms oxaloacetate, a four-carbon dicarboxylic acid source for the tricarboxylic acid cycle. The sequence is that of Phosphoenolpyruvate carboxylase from Xanthomonas campestris pv. campestris (strain 8004).